The primary structure comprises 132 residues: Auxin-responsive protein SAUR72 (132 aa).

The disordered stretch occupies residues 22-54 (SDSQRPSRRSESFLRSSVTRRSKKQTSSVPEGH). Residues 23–33 (DSQRPSRRSES) are compositionally biased toward basic and acidic residues.

It belongs to the ARG7 family. In terms of assembly, interacts with and inhibits PP2C-D subfamily of type 2C phosphatases such as PP2C67/PP2C-D1. Highly expressed in the steles of roots and hypocotyls.

Its subcellular location is the cytoplasm. Functionally, provide a mechanistic link between auxin and plasma membrane H(+)-ATPases (PM H(+)-ATPases, e.g. AHA1 and AHA2), and triggers PM H(+)-ATPases activity by promoting phosphorylation of their C-terminal autoinhibitory domain as a result of PP2C-D subfamily of type 2C phosphatases inhibition, thus leading to the acidification of the apoplast and the facilitation of solutes and water uptake to drive cell expansion. Plays a role in the regulation of cell expansion, root meristem patterning and auxin transport. The chain is Auxin-responsive protein SAUR72 from Arabidopsis thaliana (Mouse-ear cress).